We begin with the raw amino-acid sequence, 562 residues long: F-box only protein 33 (562 aa).

Positions Ala68–Leu114 constitute an F-box domain. A compositionally biased stretch (gly residues) spans Gly155–Gly173. Residues Gly155 to Gly176 form a disordered region.

Part of the SCF (SKP1-CUL1-F-box) E3 ubiquitin-protein ligase complex SCF(FBXO33) formed of CUL1, SKP1, RBX1 and FBXO33. Interacts via its N-terminus with YBX1 CSD domain. Directly interacts with SKP1 and CUL1.

Its pathway is protein modification; protein ubiquitination. Its function is as follows. Substrate recognition component of a SCF (SKP1-CUL1-F-box protein) E3 ubiquitin-protein ligase complex which mediates the ubiquitination and subsequent proteasomal degradation of target proteins. Probably recognizes and binds to phosphorylated target proteins. Recognizes YBX1. This chain is F-box only protein 33 (Fbxo33), found in Mus musculus (Mouse).